A 185-amino-acid polypeptide reads, in one-letter code: CASP-like protein 2C1 (185 aa).

At 1 to 12 (MVAARVSEVKAE) the chain is on the cytoplasmic side. The chain crosses the membrane as a helical span at residues 13 to 33 (GVLRGACAALAAAAALLVGLS). Topologically, residues 34–52 (TQTETVLLVRKKATVKDVQ) are extracellular. Residues 53 to 73 (ALWVLAMAAAAAAGYHLLQLL) traverse the membrane as a helical segment. Residues 74–105 (KCFYLGRRVGGGASPCRRSSRALAWTCLLLDK) lie on the Cytoplasmic side of the membrane. Residues 106-126 (ACAYTTFATTVAAAQACVIAL) form a helical membrane-spanning segment. At 127 to 147 (DGAHALQWTKLCNIYTRFCEQ) the chain is on the extracellular side. Residues 148–168 (IAGSLVLGMLAAVGTAVLSAA) traverse the membrane as a helical segment. At 169 to 185 (SARNVFRHYSPGTYAAH) the chain is on the cytoplasmic side.

Belongs to the Casparian strip membrane proteins (CASP) family. Homodimer and heterodimers.

Its subcellular location is the cell membrane. This is CASP-like protein 2C1 from Sorghum bicolor (Sorghum).